The following is a 312-amino-acid chain: Pimeloyl-[acyl-carrier protein] methyl ester esterase (312 aa).

An AB hydrolase-1 domain is found at 17 to 241 (VYLIHGWGAN…KAAHAPFLSH (225 aa)). Residues Trp23, 83 to 84 (SL), and 145 to 149 (FLQLQ) contribute to the substrate site. The active-site Nucleophile is Ser83. Active-site residues include Asp207 and His235. Substrate is bound at residue His235.

Belongs to the AB hydrolase superfamily. Carboxylesterase BioH family. In terms of assembly, monomer.

It localises to the cytoplasm. The catalysed reaction is 6-carboxyhexanoyl-[ACP] methyl ester + H2O = 6-carboxyhexanoyl-[ACP] + methanol + H(+). Its pathway is cofactor biosynthesis; biotin biosynthesis. In terms of biological role, the physiological role of BioH is to remove the methyl group introduced by BioC when the pimeloyl moiety is complete. It allows to synthesize pimeloyl-ACP via the fatty acid synthetic pathway through the hydrolysis of the ester bonds of pimeloyl-ACP esters. In Neisseria meningitidis serogroup A / serotype 4A (strain DSM 15465 / Z2491), this protein is Pimeloyl-[acyl-carrier protein] methyl ester esterase.